The following is a 209-amino-acid chain: Ribosomal RNA large subunit methyltransferase E (209 aa).

Gly63, Trp65, Asp83, Asp99, and Asp124 together coordinate S-adenosyl-L-methionine. Catalysis depends on Lys164, which acts as the Proton acceptor.

Belongs to the class I-like SAM-binding methyltransferase superfamily. RNA methyltransferase RlmE family.

It localises to the cytoplasm. It carries out the reaction uridine(2552) in 23S rRNA + S-adenosyl-L-methionine = 2'-O-methyluridine(2552) in 23S rRNA + S-adenosyl-L-homocysteine + H(+). Its function is as follows. Specifically methylates the uridine in position 2552 of 23S rRNA at the 2'-O position of the ribose in the fully assembled 50S ribosomal subunit. This chain is Ribosomal RNA large subunit methyltransferase E, found in Shewanella oneidensis (strain ATCC 700550 / JCM 31522 / CIP 106686 / LMG 19005 / NCIMB 14063 / MR-1).